The primary structure comprises 242 residues: Probable transcriptional regulatory protein Bphyt_1301 (242 aa).

Belongs to the TACO1 family.

It is found in the cytoplasm. In Paraburkholderia phytofirmans (strain DSM 17436 / LMG 22146 / PsJN) (Burkholderia phytofirmans), this protein is Probable transcriptional regulatory protein Bphyt_1301.